Consider the following 467-residue polypeptide: Chromosomal replication initiator protein DnaA (467 aa).

The segment at 1 to 80 (MTSELWHQCL…APRISLKIGS (80 aa)) is domain I, interacts with DnaA modulators. Residues 80 to 130 (SITGNSKGQQASKDSAVGATRTTAPSRPVIADVAPSGERNVTVEGAIKHES) form a domain II region. The interval 131-347 (YLNPTFTFET…GALKLVIANA (217 aa)) is domain III, AAA+ region. The ATP site is built by G175, G177, K178, and T179. Positions 348-467 (HFTGQEITPA…YQNFMRMLTS (120 aa)) are domain IV, binds dsDNA.

The protein belongs to the DnaA family. Oligomerizes as a right-handed, spiral filament on DNA at oriC.

The protein resides in the cytoplasm. Functionally, plays an essential role in the initiation and regulation of chromosomal replication. ATP-DnaA binds to the origin of replication (oriC) to initiate formation of the DNA replication initiation complex once per cell cycle. Binds the DnaA box (a 9 base pair repeat at the origin) and separates the double-stranded (ds)DNA. Forms a right-handed helical filament on oriC DNA; dsDNA binds to the exterior of the filament while single-stranded (ss)DNA is stabiized in the filament's interior. The ATP-DnaA-oriC complex binds and stabilizes one strand of the AT-rich DNA unwinding element (DUE), permitting loading of DNA polymerase. After initiation quickly degrades to an ADP-DnaA complex that is not apt for DNA replication. Binds acidic phospholipids. This Hahella chejuensis (strain KCTC 2396) protein is Chromosomal replication initiator protein DnaA.